The chain runs to 350 residues: Type II restriction enzyme NgoBI (350 aa).

It carries out the reaction Endonucleolytic cleavage of DNA to give specific double-stranded fragments with terminal 5'-phosphates.. Functionally, a P subtype restriction enzyme that recognizes the double-stranded sequence 5'-RGCGCY-3'; the cleavage site is unknown. The sequence is that of Type II restriction enzyme NgoBI (ngoBIR) from Neisseria gonorrhoeae.